Reading from the N-terminus, the 255-residue chain is DNA repair protein RecO (255 aa).

It belongs to the RecO family.

Functionally, involved in DNA repair and RecF pathway recombination. The chain is DNA repair protein RecO from Listeria welshimeri serovar 6b (strain ATCC 35897 / DSM 20650 / CCUG 15529 / CIP 8149 / NCTC 11857 / SLCC 5334 / V8).